We begin with the raw amino-acid sequence, 493 residues long: Probable cytosol aminopeptidase (493 aa).

The Mn(2+) site is built by Lys-257 and Asp-262. Residue Lys-269 is part of the active site. Asp-280, Asp-339, and Glu-341 together coordinate Mn(2+). Arg-343 is a catalytic residue.

Belongs to the peptidase M17 family. Mn(2+) serves as cofactor.

The protein localises to the cytoplasm. It carries out the reaction Release of an N-terminal amino acid, Xaa-|-Yaa-, in which Xaa is preferably Leu, but may be other amino acids including Pro although not Arg or Lys, and Yaa may be Pro. Amino acid amides and methyl esters are also readily hydrolyzed, but rates on arylamides are exceedingly low.. It catalyses the reaction Release of an N-terminal amino acid, preferentially leucine, but not glutamic or aspartic acids.. Functionally, presumably involved in the processing and regular turnover of intracellular proteins. Catalyzes the removal of unsubstituted N-terminal amino acids from various peptides. The sequence is that of Probable cytosol aminopeptidase (pepA) from Aquifex aeolicus (strain VF5).